Here is a 1266-residue protein sequence, read N- to C-terminus: Neuronal-glial cell adhesion molecule (1266 aa).

The first 20 residues, 1-20 (MALPMVGLLLLLLLGGPGAA), serve as a signal peptide directing secretion. Residues 21–1130 (ITIPPEYGAH…PQPGGGVCTK (1110 aa)) are Extracellular-facing. Ig-like C2-type domains lie at 36 to 128 (PELT…NVIA), 135 to 221 (PKEK…KEPL), 236 to 322 (PRLL…HSVT), 327 to 413 (PYWV…AFLH), 418 to 506 (PLRM…ALLE), and 510 to 597 (PTRI…AQLR). Disulfide bonds link C58–C110, C154–C205, C260–C306, and C348–C397. N-linked (GlcNAc...) asparagine glycosylation occurs at N97. N-linked (GlcNAc...) asparagine glycans are attached at residues N288, N390, N434, N472, and N498. C441 and C490 are joined by a disulfide. C532 and C581 form a disulfide bridge. Fibronectin type-III domains are found at residues 603–698 (PSRD…TPPA), 700–804 (PERN…SGED), 809–930 (YPEN…TPEG), 934–1021 (PPEE…TKPE), and 1022–1118 (PPSP…TNGT). Residues 685 to 710 (EHHAPSAPIETPPAAPERNPGGVHGE) form a disordered region. N-linked (GlcNAc...) asparagine glycosylation is found at N712 and N819. Residues 857–882 (SRRQAPPDPPQIPQSPAEDPPPFPPV) form a disordered region. Pro residues predominate over residues 862 to 881 (PPDPPQIPQSPAEDPPPFPP). The short motif at 914 to 916 (RGD) is the Cell attachment site element. A disordered region spans residues 1004–1025 (STPRERPALQTVGSTKPEPPSP). N-linked (GlcNAc...) asparagine glycans are attached at residues N1061, N1075, N1100, and N1116. The chain crosses the membrane as a helical span at residues 1131-1153 (GWFIGFVSSVVLLLLILLILCFI). Residues 1154–1266 (KRSKGGKYSV…ASPCAGPPLD (113 aa)) are Cytoplasmic-facing. The segment covering 1163–1195 (VKDKEDTQVDSEARPMKDETFGEYRSLESEAEK) has biased composition (basic and acidic residues). The segment at 1163–1266 (VKDKEDTQVD…ASPCAGPPLD (104 aa)) is disordered. Positions 1199–1211 (SGSGAGSGVGSPG) are enriched in gly residues.

Belongs to the immunoglobulin superfamily. L1/neurofascin/NgCAM family. Binds to itself and to axonin 1. As to expression, brain.

The protein localises to the cell membrane. Mediates the adhesion of neurons to neurons and neurons to glia. It is involved in neuronal migration, neurite fasciculation and outgrowth. The chain is Neuronal-glial cell adhesion molecule from Gallus gallus (Chicken).